We begin with the raw amino-acid sequence, 212 residues long: Peroxisomal membrane protein 4 (212 aa).

2 consecutive transmembrane segments (helical) span residues 97-117 (GKTY…LVFG) and 153-173 (LDPF…LFEY). A glycan (N-linked (GlcNAc...) asparagine) is linked at N206.

Belongs to the peroxisomal membrane protein PXMP2/4 family. Interacts with PEX19.

The protein resides in the peroxisome membrane. In Bos taurus (Bovine), this protein is Peroxisomal membrane protein 4 (PXMP4).